The primary structure comprises 827 residues: Tuftelin-interacting protein 11 (827 aa).

2 disordered regions span residues 31–129 and 179–203; these read FNPH…KGFV and QRKG…DFPV. The segment covering 41–60 has biased composition (basic and acidic residues); the sequence is TKEEATYGVWAERDSDEERP. Over residues 88 to 98 the composition is skewed to acidic residues; sequence DVSDEDSDEDE. Over residues 99–112 the composition is skewed to basic and acidic residues; sequence KPVKQEEIPKEFVP. The G-patch domain maps to 145-191; sequence TKGIGQKLLQKMGYVPGRGLGKNAQGIINPIEAKQRKGKGAVGAYGS.

It belongs to the TFP11/STIP family. In terms of assembly, identified in the spliceosome C complex.

Its subcellular location is the nucleus. Functionally, involved in pre-mRNA splicing, specifically in spliceosome disassembly during late-stage splicing events. The sequence is that of Tuftelin-interacting protein 11 (TFIP11) from Gallus gallus (Chicken).